Reading from the N-terminus, the 167-residue chain is Insertion element IS1 4 protein InsB (167 aa).

This sequence belongs to the transposase 27 family.

Absolutely required for transposition of IS1. In Escherichia coli (strain K12), this protein is Insertion element IS1 4 protein InsB (insB4).